Reading from the N-terminus, the 452-residue chain is Phosphoglucosamine mutase (452 aa).

The Phosphoserine intermediate role is filled by serine 97. Mg(2+)-binding residues include serine 97, aspartate 236, aspartate 238, and aspartate 240. Serine 97 carries the post-translational modification Phosphoserine.

The protein belongs to the phosphohexose mutase family. Mg(2+) is required as a cofactor. In terms of processing, activated by phosphorylation.

The catalysed reaction is alpha-D-glucosamine 1-phosphate = D-glucosamine 6-phosphate. In terms of biological role, catalyzes the conversion of glucosamine-6-phosphate to glucosamine-1-phosphate. This chain is Phosphoglucosamine mutase, found in Prochlorococcus marinus subsp. pastoris (strain CCMP1986 / NIES-2087 / MED4).